Consider the following 107-residue polypeptide: U1-lycotoxin-Ls1q (107 aa).

The signal sequence occupies residues 1-20 (MMKVLVVVALLVTLISYSSS). A propeptide spanning residues 21 to 41 (EGIDDLEADELLSLMANEQTR) is cleaved from the precursor. 4 cysteine pairs are disulfide-bonded: C44–C59, C51–C68, C58–C86, and C70–C84.

This sequence belongs to the neurotoxin 19 (CSTX) family. 04 (U1-Lctx) subfamily. As to expression, expressed by the venom gland.

It is found in the secreted. The polypeptide is U1-lycotoxin-Ls1q (Lycosa singoriensis (Wolf spider)).